The chain runs to 444 residues: MHILVVSVNYRTAPVEFREKLTFQAAELERAMTTLQNQKSVLENVIVSTCNRTEIYAVVDQLHTGRYYIKKFLADWFQLEIEEVAPYLTIFEQDGAIDHLFRVTCGLDSMVVGETQILGQIKDSFLEAQQVKATGTIFNELFKQVITLAKRAHSETTIGESAMSVSYAAVELGKKIFGELTDCHVLILGAGKMGELALQNLYGSGARKVTVMNRTLSKAEVMAEKYMGHAKPLSELQCALLEADILISSTGASDYVITKEMMTKVEKMRSGRPLFMVDIAVPRDIDPAIDELEGSFLYDIDDLQGVVEANRAERLKEAEKIQFMIEEEIVLFKTWLSTLGVVPLISALRDKALAIQSETMESLERKIPNLSDRERKVISKHTKSIINQLLKDPILVAKEIAAEEGADEKLALFAKIFDLEMEDVESRAEEVEHKRAWTPSVPSL.

Residues 49-52 (TCNR), S109, 114-116 (ETQ), and Q120 each bind substrate. Catalysis depends on C50, which acts as the Nucleophile. Position 189-194 (189-194 (GAGKMG)) interacts with NADP(+).

Belongs to the glutamyl-tRNA reductase family. In terms of assembly, homodimer.

The catalysed reaction is (S)-4-amino-5-oxopentanoate + tRNA(Glu) + NADP(+) = L-glutamyl-tRNA(Glu) + NADPH + H(+). It functions in the pathway porphyrin-containing compound metabolism; protoporphyrin-IX biosynthesis; 5-aminolevulinate from L-glutamyl-tRNA(Glu): step 1/2. Functionally, catalyzes the NADPH-dependent reduction of glutamyl-tRNA(Glu) to glutamate 1-semialdehyde (GSA). The protein is Glutamyl-tRNA reductase of Bacillus cereus (strain 03BB102).